Here is a 348-residue protein sequence, read N- to C-terminus: Elongation factor Ts (348 aa).

The involved in Mg(2+) ion dislocation from EF-Tu stretch occupies residues threonine 82–valine 85.

It belongs to the EF-Ts family.

The protein localises to the cytoplasm. Associates with the EF-Tu.GDP complex and induces the exchange of GDP to GTP. It remains bound to the aminoacyl-tRNA.EF-Tu.GTP complex up to the GTP hydrolysis stage on the ribosome. This chain is Elongation factor Ts, found in Aliarcobacter butzleri (strain RM4018) (Arcobacter butzleri).